Here is a 374-residue protein sequence, read N- to C-terminus: Queuine tRNA-ribosyltransferase (374 aa).

The active-site Proton acceptor is Asp89. Substrate contacts are provided by residues 89-93 (DSGGF), Asp143, Gln185, and Gly212. The RNA binding stretch occupies residues 243–249 (GVGKPED). The Nucleophile role is filled by Asp262. The tract at residues 267–271 (TRNAR) is RNA binding; important for wobble base 34 recognition. Zn(2+) contacts are provided by Cys300, Cys302, Cys305, and His331.

The protein belongs to the queuine tRNA-ribosyltransferase family. In terms of assembly, homodimer. Within each dimer, one monomer is responsible for RNA recognition and catalysis, while the other monomer binds to the replacement base PreQ1. Zn(2+) serves as cofactor.

The catalysed reaction is 7-aminomethyl-7-carbaguanine + guanosine(34) in tRNA = 7-aminomethyl-7-carbaguanosine(34) in tRNA + guanine. Its pathway is tRNA modification; tRNA-queuosine biosynthesis. Its function is as follows. Catalyzes the base-exchange of a guanine (G) residue with the queuine precursor 7-aminomethyl-7-deazaguanine (PreQ1) at position 34 (anticodon wobble position) in tRNAs with GU(N) anticodons (tRNA-Asp, -Asn, -His and -Tyr). Catalysis occurs through a double-displacement mechanism. The nucleophile active site attacks the C1' of nucleotide 34 to detach the guanine base from the RNA, forming a covalent enzyme-RNA intermediate. The proton acceptor active site deprotonates the incoming PreQ1, allowing a nucleophilic attack on the C1' of the ribose to form the product. After dissociation, two additional enzymatic reactions on the tRNA convert PreQ1 to queuine (Q), resulting in the hypermodified nucleoside queuosine (7-(((4,5-cis-dihydroxy-2-cyclopenten-1-yl)amino)methyl)-7-deazaguanosine). In Saccharophagus degradans (strain 2-40 / ATCC 43961 / DSM 17024), this protein is Queuine tRNA-ribosyltransferase.